Here is a 933-residue protein sequence, read N- to C-terminus: Isoleucine--tRNA ligase (933 aa).

A 'HIGH' region motif is present at residues 57 to 67 (PYANGNIHVGH). E554 contributes to the L-isoleucyl-5'-AMP binding site. The 'KMSKS' region motif lies at 595–599 (KMSKS). K598 lines the ATP pocket.

Belongs to the class-I aminoacyl-tRNA synthetase family. IleS type 1 subfamily. Monomer.

It is found in the cytoplasm. The enzyme catalyses tRNA(Ile) + L-isoleucine + ATP = L-isoleucyl-tRNA(Ile) + AMP + diphosphate. Catalyzes the attachment of isoleucine to tRNA(Ile). As IleRS can inadvertently accommodate and process structurally similar amino acids such as valine, to avoid such errors it has two additional distinct tRNA(Ile)-dependent editing activities. One activity is designated as 'pretransfer' editing and involves the hydrolysis of activated Val-AMP. The other activity is designated 'posttransfer' editing and involves deacylation of mischarged Val-tRNA(Ile). This Streptococcus pyogenes serotype M28 (strain MGAS6180) protein is Isoleucine--tRNA ligase.